A 142-amino-acid chain; its full sequence is Large ribosomal subunit protein uL13 (142 aa).

Belongs to the universal ribosomal protein uL13 family. In terms of assembly, part of the 50S ribosomal subunit.

Its function is as follows. This protein is one of the early assembly proteins of the 50S ribosomal subunit, although it is not seen to bind rRNA by itself. It is important during the early stages of 50S assembly. This is Large ribosomal subunit protein uL13 from Idiomarina loihiensis (strain ATCC BAA-735 / DSM 15497 / L2-TR).